Consider the following 260-residue polypeptide: Membrane protein insertase YidC 1 (260 aa).

An N-terminal signal peptide occupies residues 1-22 (MLKSYRAVLVSLSLLLVFVLSG). C23 carries N-palmitoyl cysteine lipidation. A lipid anchor (S-diacylglycerol cysteine) is attached at C23. 5 helical membrane-spanning segments follow: residues 29–49 (IDAHSTGIWDHYFVYPISFMI), 52–72 (VAHHIPGASFGIAIIIMTLVI), 133–153 (LAGCWPLLIQMPIFSALYYAI), 164–184 (FLWVNLGHADPYHILPIIAAL), and 213–233 (MPAMILFMGFAAPSGLVLYWI).

It belongs to the OXA1/ALB3/YidC family. Type 2 subfamily.

It is found in the cell membrane. Required for the insertion and/or proper folding and/or complex formation of integral membrane proteins into the membrane. Involved in integration of membrane proteins that insert both dependently and independently of the Sec translocase complex, as well as at least some lipoproteins. In Bacillus anthracis, this protein is Membrane protein insertase YidC 1.